A 364-amino-acid chain; its full sequence is Uroporphyrinogen decarboxylase (364 aa).

Substrate-binding positions include 28 to 32 (RQAGR), Phe47, Asp78, Tyr158, Thr213, and His334.

This sequence belongs to the uroporphyrinogen decarboxylase family. Homodimer.

It is found in the cytoplasm. The catalysed reaction is uroporphyrinogen III + 4 H(+) = coproporphyrinogen III + 4 CO2. It functions in the pathway porphyrin-containing compound metabolism; protoporphyrin-IX biosynthesis; coproporphyrinogen-III from 5-aminolevulinate: step 4/4. Functionally, catalyzes the decarboxylation of four acetate groups of uroporphyrinogen-III to yield coproporphyrinogen-III. The protein is Uroporphyrinogen decarboxylase of Ralstonia nicotianae (strain ATCC BAA-1114 / GMI1000) (Ralstonia solanacearum).